The sequence spans 229 residues: Triosephosphate isomerase (229 aa).

6-8 provides a ligand contact to substrate; that stretch reads NLK. The active-site Electrophile is the His-85. The active-site Proton acceptor is the Glu-152. 2 residues coordinate substrate: Gly-158 and Ser-188.

It belongs to the triosephosphate isomerase family. As to quaternary structure, homodimer.

The protein resides in the cytoplasm. The enzyme catalyses D-glyceraldehyde 3-phosphate = dihydroxyacetone phosphate. The protein operates within carbohydrate biosynthesis; gluconeogenesis. Its pathway is carbohydrate degradation; glycolysis; D-glyceraldehyde 3-phosphate from glycerone phosphate: step 1/1. Its function is as follows. Involved in the gluconeogenesis. Catalyzes stereospecifically the conversion of dihydroxyacetone phosphate (DHAP) to D-glyceraldehyde-3-phosphate (G3P). In Campylobacter curvus (strain 525.92), this protein is Triosephosphate isomerase.